The following is a 303-amino-acid chain: ATP synthase gamma chain (303 aa).

Belongs to the ATPase gamma chain family. F-type ATPases have 2 components, CF(1) - the catalytic core - and CF(0) - the membrane proton channel. CF(1) has five subunits: alpha(3), beta(3), gamma(1), delta(1), epsilon(1). CF(0) has three main subunits: a, b and c.

The protein resides in the cell inner membrane. Its function is as follows. Produces ATP from ADP in the presence of a proton gradient across the membrane. The gamma chain is believed to be important in regulating ATPase activity and the flow of protons through the CF(0) complex. This Elusimicrobium minutum (strain Pei191) protein is ATP synthase gamma chain.